A 465-amino-acid chain; its full sequence is Sodium-dependent phosphate transport protein 1 (465 aa).

N-linked (GlcNAc...) asparagine glycans are attached at residues Asn39, Asn47, and Asn56. 10 helical membrane-spanning segments follow: residues 79-99, 117-137, 176-196, 199-219, 260-280, 304-324, 337-356, 363-383, 399-419, and 429-449; these read GLIL…VGYL, SLMS…VIVC, FVMG…LLGW, VFYI…FLFF, LPLW…SLLV, LPYL…DFFL, LFTT…LLYL, TVIF…GQLI, VTAL…GLIL, and KIFF…FLFA.

It belongs to the major facilitator superfamily. Sodium/anion cotransporter family. In terms of assembly, interacts with PDZK1. Kidney.

Its subcellular location is the apical cell membrane. The catalysed reaction is 3 Na(+)(out) + phosphate(out) = 3 Na(+)(in) + phosphate(in). It catalyses the reaction urate(out) = urate(in). Its function is as follows. Important for the resorption of phosphate by the kidney. May be involved in actively transporting phosphate into cells via Na(+) cotransport in the renal brush border membrane. Plays a role in urate transport in the kidney. The sequence is that of Sodium-dependent phosphate transport protein 1 (Slc17a1) from Mus musculus (Mouse).